Reading from the N-terminus, the 877-residue chain is MAAERYNPRVAEAHWQKVWEENRTFETDNSDSREKYYVLEMFPYPSGRIHMGHVRNYAMGDVVARYKRAKGFNVLHPMGWDAFGMPAENAAMQNKVHPKEWTYQNIATMKRQLKSMGLSLDWSREFATCDVEYYHRQQMLFIDLYEKGLVTRKTSKVNWDPVDNTVLANEQVVDGRGWRSGALVEQRELTQWFFKITDFSEELLAGLDTLDQWPEKVRLMQRNWIGKSEGLQVRLALAAGTAPAGFSEVEVYTTRPDTLFGAAFVAISADHPLAKKLSEGNAALSSFIEECHQQGTSLAALETAEKKGFDTGIKVKHPFDDNWELPVYVANFVLMEYGTGAVFGCPAHDQRDLDFANKYKLKVTPVVLPKGEDAASFSIGETAYTDDGVMINSRFLDGMTPAAAFNEVASRLEKTDLVGRPQAVRKVQFRLRDWGISRQRYWGCPIPMIHCESCGVNPVPRADLPVKLPDDVEFDRPGNPLDRHATWRHVKCPKCGGDARRETDTMDTFVDSSWYYTRFTAPWENEPTDRKAADHWLPVDQYIGGIEHAILHLLYSRFFTRAMKVAGHVGVDEPFKGLFTQGMVVHETYKANGQWVSPADIRIEEIDGKRVATMLDSGAPVEIGSIEKMSKSKKNVVDPDDIIASYGADIARWFVLSDSPPERDVIWTEAGAEGAHRFVQRIWRLVAEAAPALKDVAPKAGTQGEALGVSKAAHKAVKAVGDDIEKLAFNRGVARLYELVNTLSGALQQAADGKADAEMKGALREATEMLVLMTAPMMPHLAEQCLAELGGKVAGKETLVARAPWPVFDPALVVENEIVLPVQINGKKRGDLTIARDADQASIQQAVLELDFVKAALNGGSPKKIIVVPQRIVNVVA.

The 'HIGH' region signature appears at 43–53 (PYPSGRIHMGH). The short motif at 628–632 (KMSKS) is the 'KMSKS' region element. Lys631 contacts ATP.

Belongs to the class-I aminoacyl-tRNA synthetase family.

It is found in the cytoplasm. The enzyme catalyses tRNA(Leu) + L-leucine + ATP = L-leucyl-tRNA(Leu) + AMP + diphosphate. This is Leucine--tRNA ligase from Brucella canis (strain ATCC 23365 / NCTC 10854 / RM-666).